The primary structure comprises 185 residues: GTP-dependent dephospho-CoA kinase (185 aa).

Residues D50, V52, D73, K75, and E128 each contribute to the GTP site.

This sequence belongs to the GTP-dependent DPCK family.

It carries out the reaction 3'-dephospho-CoA + GTP = GDP + CoA + H(+). The protein operates within cofactor biosynthesis; coenzyme A biosynthesis. Its function is as follows. Catalyzes the GTP-dependent phosphorylation of the 3'-hydroxyl group of dephosphocoenzyme A to form coenzyme A (CoA). In Aeropyrum pernix (strain ATCC 700893 / DSM 11879 / JCM 9820 / NBRC 100138 / K1), this protein is GTP-dependent dephospho-CoA kinase.